A 676-amino-acid polypeptide reads, in one-letter code: Lutropin-choriogonadotropic hormone receptor (676 aa).

The N-terminal stretch at 1-29 (MKQPLLALQLLKLLLLLLLPLPPLPRALR) is a signal peptide. Topologically, residues 30 to 340 (EARCCPEPCN…EDIMGYDFLR (311 aa)) are extracellular. Residue Asn103 is glycosylated (N-linked (GlcNAc...) asparagine). LRR repeat units follow at residues 126 to 151 (LPRL…IFSS), 153 to 175 (TNFI…AFQG), 176 to 200 (MNNE…AFNG), 201 to 224 (TTVI…AFRG), and 225 to 248 (ATGP…GLES). Asn178 and Asn199 each carry an N-linked (GlcNAc...) asparagine glycan. Position 308 is a sulfotyrosine (Tyr308). The helical transmembrane segment at 341-362 (VLIWLINILAIMGNMTVLFVLL) threads the bilayer. The Cytoplasmic segment spans residues 363-372 (TSRYKLTVPR). A helical membrane pass occupies residues 373 to 393 (FLMCNLSFADFCMGLYLLLIA). Over 394 to 416 (SVDSQTKGQYYNHAIDWQTGSGC) the chain is Extracellular. Cysteines 416 and 491 form a disulfide. The chain crosses the membrane as a helical span at residues 417 to 439 (NTAGFFTVFASELSVYTLTVITL). Residues 440–459 (ERWHTITYAIHLDQKLRLRH) are Cytoplasmic-facing. The helical transmembrane segment at 460 to 482 (AILIMLGGWLFSSLIAMLPLVGV) threads the bilayer. Residues 483 to 502 (SNYMKVSICFPMDVETTLSQ) are Extracellular-facing. Residues 503-526 (IYILTILILNVVAFIIICACYIKI) traverse the membrane as a helical segment. Residues 527 to 547 (YFAVRNPELMATNKDTKIAKK) lie on the Cytoplasmic side of the membrane. A helical membrane pass occupies residues 548–571 (MAILIFTDFTCMAPISFFAISAAF). Residues 572–582 (KMPLITVTNSK) lie on the Extracellular side of the membrane. A helical membrane pass occupies residues 583–604 (VLLVLFYPINSCANPFLYAIFT). The Cytoplasmic portion of the chain corresponds to 605–676 (KTFRRDFFLL…LLDKTCYKEY (72 aa)). Residues Cys620 and Cys621 are each lipidated (S-palmitoyl cysteine).

The protein belongs to the G-protein coupled receptor 1 family. FSH/LSH/TSH subfamily. Sulfated.

It is found in the cell membrane. In terms of biological role, receptor for lutropin-choriogonadotropic hormone. The activity of this receptor is mediated by G proteins which activate adenylate cyclase. In Callithrix jacchus (White-tufted-ear marmoset), this protein is Lutropin-choriogonadotropic hormone receptor (LHCGR).